A 695-amino-acid chain; its full sequence is Pentatricopeptide repeat-containing protein 1, mitochondrial (695 aa).

6 PPR repeats span residues 133-169 (TQYW…RLQP), 170-204 (LECN…DLEP), 205-243 (SDAT…NFQL), 244-278 (NLKT…GHAV), 279-315 (TEET…GIKP), and 316-352 (SRHG…TILL). Positions 391 to 416 (QKLEGPPALPEARVTSRTQPEVETTA) are disordered. PPR repeat units follow at residues 470 to 485 (EGFL…QPDI), 517 to 551 (DVTF…GIVP), 552 to 583 (NLRT…QVSP), and 584 to 618 (NIHI…SVPV). The disordered stretch occupies residues 672-695 (WQEFQNKPVGDQDTTDKAGGLRDG). Over residues 685-695 (TTDKAGGLRDG) the composition is skewed to basic and acidic residues.

It belongs to the PTCD1 family. As to quaternary structure, associates with mitochondrial leucine tRNAs. Interacts with ELAC2.

The protein localises to the mitochondrion. Its subcellular location is the mitochondrion matrix. Functionally, mitochondrial protein implicated in negative regulation of leucine tRNA levels, as well as negative regulation of mitochondria-encoded proteins and COX activity. Also affects the 3'-processing of mitochondrial tRNAs. The protein is Pentatricopeptide repeat-containing protein 1, mitochondrial (Ptcd1) of Mus musculus (Mouse).